A 359-amino-acid chain; its full sequence is Putative nucleotidyltransferase MAB21L1 (359 aa).

Residues 23–24 and 63–66 contribute to the a ribonucleoside 5'-triphosphate site; these read RK and FEGL. Mg(2+) is bound by residues glutamate 73 and glutamate 75. Residues lysine 248 and 252-255 each bind a ribonucleoside 5'-triphosphate; that span reads SLLK.

It belongs to the mab-21 family. As to quaternary structure, monomer. Homodecamer; composed of 2 back to back homopentamers. The protein may exist as monomer in solution and oiligomerizes upon ligand binding.

It localises to the nucleus. Functionally, putative nucleotidyltransferase required for several aspects of embryonic development including normal development of the eye. It is unclear whether it displays nucleotidyltransferase activity in vivo. Binds single-stranded RNA (ssRNA). The sequence is that of Putative nucleotidyltransferase MAB21L1 (mab21l1) from Danio rerio (Zebrafish).